A 272-amino-acid chain; its full sequence is 3-methyl-2-oxobutanoate hydroxymethyltransferase (272 aa).

D51 and D90 together coordinate Mg(2+). 3-methyl-2-oxobutanoate is bound by residues 51–52 (DS), D90, and K118. E120 is a binding site for Mg(2+). E187 functions as the Proton acceptor in the catalytic mechanism.

It belongs to the PanB family. In terms of assembly, homodecamer; pentamer of dimers. Mg(2+) serves as cofactor.

It is found in the cytoplasm. The catalysed reaction is 3-methyl-2-oxobutanoate + (6R)-5,10-methylene-5,6,7,8-tetrahydrofolate + H2O = 2-dehydropantoate + (6S)-5,6,7,8-tetrahydrofolate. The protein operates within cofactor biosynthesis; (R)-pantothenate biosynthesis; (R)-pantoate from 3-methyl-2-oxobutanoate: step 1/2. Catalyzes the reversible reaction in which hydroxymethyl group from 5,10-methylenetetrahydrofolate is transferred onto alpha-ketoisovalerate to form ketopantoate. This Xylella fastidiosa (strain 9a5c) protein is 3-methyl-2-oxobutanoate hydroxymethyltransferase.